The sequence spans 409 residues: Nucleoprotein (409 aa).

Disordered stretches follow at residues 1–84 (MASG…KGGR) and 121–194 (ADTK…DSGD). Positions 15–31 (PVIKLGGPKPPKVGSSG) are enriched in low complexity. Residues 29 to 160 (SSGNASWFQA…GNFRWDFIPL (132 aa)) form an RNA-binding region. Residues 31 to 156 (GNASWFQAIK…GGPDGNFRWD (126 aa)) form the CoV N NTD domain. The span at 70-84 (YWRRQARFKPGKGGR) shows a compositional bias: basic residues. Over residues 162–179 (RGRSGRSTAASSAAASRA) the composition is skewed to low complexity. Residues 180 to 192 (PSREGSRGRRSDS) are compositionally biased toward basic and acidic residues. Phosphoserine; by host occurs at positions 190 and 192. The 117-residue stretch at 215-331 (TKAKADEMAH…QCVDGVGTRP (117 aa)) folds into the CoV N CTD domain. Positions 226-333 (RYCKRTIPPN…VDGVGTRPKD (108 aa)) are dimerization. Disulfide bonds link C281/C308 and C320/C323. Positions 327 to 396 (VGTRPKDDEP…QLEFYDEPKV (70 aa)) are disordered. Over residues 358–367 (QRPKKEKKLK) the composition is skewed to basic residues. A compositionally biased stretch (basic and acidic residues) spans 368–384 (KQDDEADKALTSDEERN). T378 is modified (phosphothreonine; by host). A Phosphoserine; by host modification is found at S379.

It belongs to the gammacoronavirus nucleocapsid protein family. Homooligomer. Both monomeric and oligomeric forms interact with RNA. Interacts with protein M. Interacts with NSP3; this interaction serves to tether the genome to the newly translated replicase-transcriptase complex at a very early stage of infection. Post-translationally, ADP-ribosylated. The ADP-ribosylation is retained in the virion during infection. In terms of processing, phosphorylated on serine and threonine residues.

The protein resides in the virion. It localises to the host endoplasmic reticulum-Golgi intermediate compartment. It is found in the host Golgi apparatus. In terms of biological role, packages the positive strand viral genome RNA into a helical ribonucleocapsid (RNP) and plays a fundamental role during virion assembly through its interactions with the viral genome and membrane protein M. Plays an important role in enhancing the efficiency of subgenomic viral RNA transcription as well as viral replication. The sequence is that of Nucleoprotein from Gallus gallus (Chicken).